The sequence spans 802 residues: G-type lectin S-receptor-like serine/threonine-protein kinase At1g61550 (802 aa).

Positions 1 to 19 are cleaved as a signal peptide; sequence MTRFACFLFSTLLLSFSYA. One can recognise a Bulb-type lectin domain in the interval 20–139; it reads AITPTSPLSI…VSGITLWQSF (120 aa). The Extracellular segment spans residues 20 to 421; sequence AITPTSPLSI…EMGGNQRKKT (402 aa). Asn-48, Asn-89, Asn-112, Asn-231, and Asn-262 each carry an N-linked (GlcNAc...) asparagine glycan. Residues 273–309 enclose the EGF-like domain; it reads PANTCDFYGVCGPFGLCVMSIPPKCKCFKGFVPQFSE. 2 disulfide bridges follow: Cys-277–Cys-289 and Cys-283–Cys-297. N-linked (GlcNAc...) asparagine glycosylation is found at Asn-315, Asn-331, and Asn-370. The PAN domain occupies 328–410; that stretch reads CQGNSTGRHV…GELLSIRLAS (83 aa). Intrachain disulfides connect Cys-363–Cys-384 and Cys-367–Cys-373. A helical transmembrane segment spans residues 422-442; that stretch reads IIASIVSISLFVTLASAAFGF. Residues 443-802 lie on the Cytoplasmic side of the membrane; it reads WRYRLKHNAI…EVTQSVVLGR (360 aa). The Protein kinase domain occupies 489-774; it reads FSLVNKLGQG…DLPLPKEPTF (286 aa). ATP is bound by residues 495–503 and Lys-517; that span reads LGQGGFGPV. 2 positions are modified to phosphoserine: Ser-523 and Ser-538. Residues 578–595 form a caM-binding region; sequence RKRVEIDWPKRFSIIQGI. The active-site Proton acceptor is Asp-614. 2 positions are modified to phosphoserine: Ser-618 and Ser-631. A Phosphothreonine modification is found at Thr-648. Residue Ser-691 is modified to Phosphoserine.

It belongs to the protein kinase superfamily. Ser/Thr protein kinase family.

The protein localises to the cell membrane. The enzyme catalyses L-seryl-[protein] + ATP = O-phospho-L-seryl-[protein] + ADP + H(+). It carries out the reaction L-threonyl-[protein] + ATP = O-phospho-L-threonyl-[protein] + ADP + H(+). This Arabidopsis thaliana (Mouse-ear cress) protein is G-type lectin S-receptor-like serine/threonine-protein kinase At1g61550.